Consider the following 264-residue polypeptide: MKPTTIASLQKCKQEKKRFATITAYDYSFAKLFADEGLNVILVGDSLGMTVQGHDSTLPVTVADIAYHTTAVRRGAPNGLLLADLPFMAYATPEQAFENAATVMRAGANMVKIEGGEWLVETVKMLTERAVPVCGHLGLTPQSVNIFGGYKVQGRGDEASDRLLSDALALEAAGAQLLVLECVPVELAKRITEALVIPVIGIGAGNVTDGQILVMHDAFGITGGHIPKFAKNFLAETGDIRAAVRQYKAEVESGVYPGEEHSFH.

The Mg(2+) site is built by Asp45 and Asp84. 3-methyl-2-oxobutanoate-binding positions include 45-46 (DS), Asp84, and Lys112. A Mg(2+)-binding site is contributed by Glu114. The Proton acceptor role is filled by Glu181.

It belongs to the PanB family. As to quaternary structure, homodecamer; pentamer of dimers. It depends on Mg(2+) as a cofactor.

The protein localises to the cytoplasm. It catalyses the reaction 3-methyl-2-oxobutanoate + (6R)-5,10-methylene-5,6,7,8-tetrahydrofolate + H2O = 2-dehydropantoate + (6S)-5,6,7,8-tetrahydrofolate. It functions in the pathway cofactor biosynthesis; (R)-pantothenate biosynthesis; (R)-pantoate from 3-methyl-2-oxobutanoate: step 1/2. In terms of biological role, catalyzes the reversible reaction in which hydroxymethyl group from 5,10-methylenetetrahydrofolate is transferred onto alpha-ketoisovalerate to form ketopantoate. This chain is 3-methyl-2-oxobutanoate hydroxymethyltransferase, found in Shigella dysenteriae serotype 1 (strain Sd197).